The following is a 376-amino-acid chain: Cobalt-precorrin-5B C(1)-methyltransferase (376 aa).

Residues 353–376 form a disordered region; it reads KGRTTSTPSHQPAPSSFGDRNRRT. Positions 355-366 are enriched in polar residues; the sequence is RTTSTPSHQPAP.

It belongs to the CbiD family.

It catalyses the reaction Co-precorrin-5B + S-adenosyl-L-methionine = Co-precorrin-6A + S-adenosyl-L-homocysteine. Its pathway is cofactor biosynthesis; adenosylcobalamin biosynthesis; cob(II)yrinate a,c-diamide from sirohydrochlorin (anaerobic route): step 6/10. Its function is as follows. Catalyzes the methylation of C-1 in cobalt-precorrin-5B to form cobalt-precorrin-6A. The polypeptide is Cobalt-precorrin-5B C(1)-methyltransferase (Agrobacterium fabrum (strain C58 / ATCC 33970) (Agrobacterium tumefaciens (strain C58))).